Reading from the N-terminus, the 141-residue chain is Large ribosomal subunit protein uL11 (141 aa).

It belongs to the universal ribosomal protein uL11 family. As to quaternary structure, part of the ribosomal stalk of the 50S ribosomal subunit. Interacts with L10 and the large rRNA to form the base of the stalk. L10 forms an elongated spine to which L12 dimers bind in a sequential fashion forming a multimeric L10(L12)X complex. One or more lysine residues are methylated.

Functionally, forms part of the ribosomal stalk which helps the ribosome interact with GTP-bound translation factors. The chain is Large ribosomal subunit protein uL11 from Chlamydia trachomatis serovar A (strain ATCC VR-571B / DSM 19440 / HAR-13).